Reading from the N-terminus, the 387-residue chain is Proteinase R (387 aa).

Residues 1-21 (MRLSILLGLLPLAPRPPAVDA) form the signal peptide. The propeptide occupies 22-108 (VEQRSEPAPL…IEQDAIVNIN (87 aa)). The 66-residue stretch at 42–107 (KYIVKLKEGS…YIEQDAIVNI (66 aa)) folds into the Inhibitor I9 domain. Residues 115–387 (PWGLARISST…NLLAYNNYQG (273 aa)) enclose the Peptidase S8 domain. A Ca(2+)-binding site is contributed by Thr-124. 2 disulfides stabilise this stretch: Cys-142–Cys-231 and Cys-286–Cys-357. Catalysis depends on charge relay system residues Asp-147 and His-177. Asp-308 serves as a coordination point for Ca(2+). Catalysis depends on Ser-332, which acts as the Charge relay system. Residue Asp-368 coordinates Ca(2+).

It belongs to the peptidase S8 family. Ca(2+) is required as a cofactor.

Functionally, serine proteinase. The sequence is that of Proteinase R (PROR) from Parengyodontium album (Tritirachium album).